Consider the following 274-residue polypeptide: Large ribosomal subunit protein uL2 (274 aa).

The interval Val223–Thr258 is disordered.

Belongs to the universal ribosomal protein uL2 family. As to quaternary structure, part of the 50S ribosomal subunit. Forms a bridge to the 30S subunit in the 70S ribosome.

One of the primary rRNA binding proteins. Required for association of the 30S and 50S subunits to form the 70S ribosome, for tRNA binding and peptide bond formation. It has been suggested to have peptidyltransferase activity; this is somewhat controversial. Makes several contacts with the 16S rRNA in the 70S ribosome. The polypeptide is Large ribosomal subunit protein uL2 (Geotalea daltonii (strain DSM 22248 / JCM 15807 / FRC-32) (Geobacter daltonii)).